Reading from the N-terminus, the 66-residue chain is Large ribosomal subunit protein uL29 (66 aa).

It belongs to the universal ribosomal protein uL29 family.

In Borreliella burgdorferi (strain ZS7) (Borrelia burgdorferi), this protein is Large ribosomal subunit protein uL29.